Consider the following 306-residue polypeptide: tRNA dimethylallyltransferase (306 aa).

12-19 (GPTAAGKT) contributes to the ATP binding site. 14-19 (TAAGKT) serves as a coordination point for substrate. Interaction with substrate tRNA regions lie at residues 37 to 40 (DSAL), 161 to 165 (QRINR), and 242 to 247 (RCVGYR).

Belongs to the IPP transferase family. As to quaternary structure, monomer. Requires Mg(2+) as cofactor.

The enzyme catalyses adenosine(37) in tRNA + dimethylallyl diphosphate = N(6)-dimethylallyladenosine(37) in tRNA + diphosphate. Functionally, catalyzes the transfer of a dimethylallyl group onto the adenine at position 37 in tRNAs that read codons beginning with uridine, leading to the formation of N6-(dimethylallyl)adenosine (i(6)A). The protein is tRNA dimethylallyltransferase of Pseudoalteromonas translucida (strain TAC 125).